The chain runs to 407 residues: Phosphopentomutase (407 aa).

6 residues coordinate Mn(2+): D10, D306, H311, D347, H348, and H359.

This sequence belongs to the phosphopentomutase family. Mn(2+) is required as a cofactor.

Its subcellular location is the cytoplasm. It carries out the reaction 2-deoxy-alpha-D-ribose 1-phosphate = 2-deoxy-D-ribose 5-phosphate. It catalyses the reaction alpha-D-ribose 1-phosphate = D-ribose 5-phosphate. It participates in carbohydrate degradation; 2-deoxy-D-ribose 1-phosphate degradation; D-glyceraldehyde 3-phosphate and acetaldehyde from 2-deoxy-alpha-D-ribose 1-phosphate: step 1/2. Functionally, isomerase that catalyzes the conversion of deoxy-ribose 1-phosphate (dRib-1-P) and ribose 1-phosphate (Rib-1-P) to deoxy-ribose 5-phosphate (dRib-5-P) and ribose 5-phosphate (Rib-5-P), respectively. The chain is Phosphopentomutase from Shigella dysenteriae serotype 1 (strain Sd197).